A 137-amino-acid polypeptide reads, in one-letter code: Large ribosomal subunit protein uL16 (137 aa).

It belongs to the universal ribosomal protein uL16 family. As to quaternary structure, part of the 50S ribosomal subunit.

Its function is as follows. Binds 23S rRNA and is also seen to make contacts with the A and possibly P site tRNAs. The sequence is that of Large ribosomal subunit protein uL16 from Azotobacter vinelandii (strain DJ / ATCC BAA-1303).